Consider the following 438-residue polypeptide: V-type ATP synthase beta chain (438 aa).

Belongs to the ATPase alpha/beta chains family.

Produces ATP from ADP in the presence of a proton gradient across the membrane. The V-type beta chain is a regulatory subunit. In Chlamydia muridarum (strain MoPn / Nigg), this protein is V-type ATP synthase beta chain (atpB).